We begin with the raw amino-acid sequence, 605 residues long: MPRMTNTPIKNIRNFAIVAHIDHGKSTLADRLIQMTGSLEEREMKEQVLDSMDIERERGITIKANTVRLEYDARDGEHYVLNLIDTPGHVDFAYEVSRSLAACESSLLVVDASQGVEAQTLANVYQAIDNNHEIVPVLNKVDLPAAEPERVKAQIEDVIGLDASDAIPISAKTGVGVDEVLEAIVMRLPPPHEGDASAPLKALLVDSWYDAYLGVIVLVRIIDGVLKKGQTVRMMGTGARYPVDRVGVMTPKMVMVESLGPGEIGFITASIKEVADTRVGDTITEDKRATAAALPGFKPAQPVVFCGLFPVDAADFEDLRAAVGKLRLNDASFSYEMETSAALGFGFRCGFLGLLHLEIIQERLTREFDLDLIATAPSVVYRMNLTDGKTVELHNPADMPDPVKIAEIEEPWIRATILTPDEHLGGILKLCQDRRGVQADLSYAGSRAMLVYDLPLNEVVFDFYDRLKSISRGYASFDYHLTDYREGDLVKMSILVNDEPVDALSMLVHRSQAERRGRAMCEKLKELIPQHMFKIPIQAAIGGRIIARETISALRKDVTAKCYGGDVTRKRKLLEKQKEGKKKMRQFGKVEIPQEAFIQALKMGD.

One can recognise a tr-type G domain in the interval 10 to 192 (KNIRNFAIVA…AIVMRLPPPH (183 aa)). GTP-binding positions include 22 to 27 (DHGKST) and 139 to 142 (NKVD).

It belongs to the TRAFAC class translation factor GTPase superfamily. Classic translation factor GTPase family. LepA subfamily.

Its subcellular location is the cell inner membrane. It carries out the reaction GTP + H2O = GDP + phosphate + H(+). Required for accurate and efficient protein synthesis under certain stress conditions. May act as a fidelity factor of the translation reaction, by catalyzing a one-codon backward translocation of tRNAs on improperly translocated ribosomes. Back-translocation proceeds from a post-translocation (POST) complex to a pre-translocation (PRE) complex, thus giving elongation factor G a second chance to translocate the tRNAs correctly. Binds to ribosomes in a GTP-dependent manner. This is Elongation factor 4 from Chelativorans sp. (strain BNC1).